The following is a 246-amino-acid chain: uncharacterized protein (246 aa).

This is an uncharacterized protein from Escherichia coli O157:H7.